Reading from the N-terminus, the 529-residue chain is Bifunctional purine biosynthesis protein PurH (529 aa).

The MGS-like domain occupies 1-148 (MQQRRPVRRA…KNHKDVAIVV (148 aa)). Residue Lys-287 is modified to N6-acetyllysine.

Belongs to the PurH family.

The enzyme catalyses (6R)-10-formyltetrahydrofolate + 5-amino-1-(5-phospho-beta-D-ribosyl)imidazole-4-carboxamide = 5-formamido-1-(5-phospho-D-ribosyl)imidazole-4-carboxamide + (6S)-5,6,7,8-tetrahydrofolate. It carries out the reaction IMP + H2O = 5-formamido-1-(5-phospho-D-ribosyl)imidazole-4-carboxamide. The protein operates within purine metabolism; IMP biosynthesis via de novo pathway; 5-formamido-1-(5-phospho-D-ribosyl)imidazole-4-carboxamide from 5-amino-1-(5-phospho-D-ribosyl)imidazole-4-carboxamide (10-formyl THF route): step 1/1. It functions in the pathway purine metabolism; IMP biosynthesis via de novo pathway; IMP from 5-formamido-1-(5-phospho-D-ribosyl)imidazole-4-carboxamide: step 1/1. The sequence is that of Bifunctional purine biosynthesis protein PurH from Escherichia coli O7:K1 (strain IAI39 / ExPEC).